A 536-amino-acid polypeptide reads, in one-letter code: Phosphoenolpyruvate carboxykinase (ATP) (536 aa).

Arg-61, Tyr-195, and Lys-201 together coordinate substrate. Residues Lys-201, His-220, and 236–244 (GLSGTGKTT) contribute to the ATP site. Mn(2+) is bound by residues Lys-201 and His-220. Residue Asp-257 coordinates Mn(2+). Residues Glu-285, Arg-322, and Thr-447 each coordinate ATP. Arg-322 serves as a coordination point for substrate.

Belongs to the phosphoenolpyruvate carboxykinase (ATP) family. It depends on Mn(2+) as a cofactor.

It localises to the cytoplasm. The enzyme catalyses oxaloacetate + ATP = phosphoenolpyruvate + ADP + CO2. The protein operates within carbohydrate biosynthesis; gluconeogenesis. Involved in the gluconeogenesis. Catalyzes the conversion of oxaloacetate (OAA) to phosphoenolpyruvate (PEP) through direct phosphoryl transfer between the nucleoside triphosphate and OAA. The sequence is that of Phosphoenolpyruvate carboxykinase (ATP) from Rhizobium etli (strain ATCC 51251 / DSM 11541 / JCM 21823 / NBRC 15573 / CFN 42).